Consider the following 105-residue polypeptide: Large ribosomal subunit protein uL24 (105 aa).

It belongs to the universal ribosomal protein uL24 family. Part of the 50S ribosomal subunit.

In terms of biological role, one of two assembly initiator proteins, it binds directly to the 5'-end of the 23S rRNA, where it nucleates assembly of the 50S subunit. One of the proteins that surrounds the polypeptide exit tunnel on the outside of the subunit. The polypeptide is Large ribosomal subunit protein uL24 (Mycolicibacterium vanbaalenii (strain DSM 7251 / JCM 13017 / BCRC 16820 / KCTC 9966 / NRRL B-24157 / PYR-1) (Mycobacterium vanbaalenii)).